A 315-amino-acid chain; its full sequence is Tyrosine recombinase XerC (315 aa).

One can recognise a Core-binding (CB) domain in the interval 14–105 (PDLLNERQSW…GLRSLLHHLQ (92 aa)). The Tyr recombinase domain occupies 126–309 (SLPKPLTDRQ…DTARLLEIYD (184 aa)). Residues arginine 169, lysine 193, histidine 261, arginine 264, and histidine 287 contribute to the active site. The active-site O-(3'-phospho-DNA)-tyrosine intermediate is the tyrosine 296.

It belongs to the 'phage' integrase family. XerC subfamily. In terms of assembly, forms a cyclic heterotetrameric complex composed of two molecules of XerC and two molecules of XerD.

The protein resides in the cytoplasm. Site-specific tyrosine recombinase, which acts by catalyzing the cutting and rejoining of the recombining DNA molecules. The XerC-XerD complex is essential to convert dimers of the bacterial chromosome into monomers to permit their segregation at cell division. It also contributes to the segregational stability of plasmids. The sequence is that of Tyrosine recombinase XerC from Agrobacterium fabrum (strain C58 / ATCC 33970) (Agrobacterium tumefaciens (strain C58)).